A 266-amino-acid chain; its full sequence is Hydroxyethylthiazole kinase (266 aa).

Residue Met43 coordinates substrate. Residues Arg119 and Thr166 each coordinate ATP. Gly193 contributes to the substrate binding site.

It belongs to the Thz kinase family. It depends on Mg(2+) as a cofactor.

The catalysed reaction is 5-(2-hydroxyethyl)-4-methylthiazole + ATP = 4-methyl-5-(2-phosphooxyethyl)-thiazole + ADP + H(+). It functions in the pathway cofactor biosynthesis; thiamine diphosphate biosynthesis; 4-methyl-5-(2-phosphoethyl)-thiazole from 5-(2-hydroxyethyl)-4-methylthiazole: step 1/1. Its function is as follows. Catalyzes the phosphorylation of the hydroxyl group of 4-methyl-5-beta-hydroxyethylthiazole (THZ). The protein is Hydroxyethylthiazole kinase of Methanococcus maripaludis (strain C6 / ATCC BAA-1332).